A 421-amino-acid polypeptide reads, in one-letter code: Exopolysaccharide production protein ExoF (421 aa).

Positions 1-31 (MQSNRRSGKSAGSRMVSCFTRLALLAALAAS) are cleaved as a signal peptide.

The protein localises to the periplasm. It participates in glycan metabolism; exopolysaccharide biosynthesis. Its function is as follows. Involved in succinoglycan (EPS I) synthesis. Needed for the addition of the first sugar (galactose) to the isoprenoid carrier. This is Exopolysaccharide production protein ExoF (exoF) from Rhizobium meliloti (strain 1021) (Ensifer meliloti).